The sequence spans 118 residues: Large ribosomal subunit protein bL19 (118 aa).

Belongs to the bacterial ribosomal protein bL19 family.

In terms of biological role, this protein is located at the 30S-50S ribosomal subunit interface and may play a role in the structure and function of the aminoacyl-tRNA binding site. This chain is Large ribosomal subunit protein bL19, found in Lactiplantibacillus plantarum (strain ATCC BAA-793 / NCIMB 8826 / WCFS1) (Lactobacillus plantarum).